Consider the following 162-residue polypeptide: EF-hand calcium-binding domain-containing protein 11 (162 aa).

EF-hand domains lie at 18 to 53, 91 to 126, and 127 to 162; these read SERR…LFGY, LYRN…VAPK, and LPSR…GKAK. Ca(2+) contacts are provided by Asp-140, Asp-142, Asp-144, His-146, and Asp-151.

This is EF-hand calcium-binding domain-containing protein 11 (Efcab11) from Rattus norvegicus (Rat).